Reading from the N-terminus, the 91-residue chain is Potassium channel toxin AaTXK-beta (91 aa).

The N-terminal stretch at 1–19 (MQRNLVVLLFLGMVALSSC) is a signal peptide. The propeptide occupies 20-27 (GLREKHVQ). A BetaSPN-type CS-alpha/beta domain is found at 54–91 (QFGCPAYQGYCDDHCQDIKKEEGFCHGFKCKCGIPMGF). Cystine bridges form between Cys57/Cys78, Cys64/Cys83, and Cys68/Cys85.

The protein belongs to the long chain scorpion toxin family. Class 1 subfamily. Monomer (both chains). In terms of tissue distribution, expressed by the venom gland.

It is found in the secreted. Functionally, inhibits voltage-gated potassium channels (Kv). Does not activate Kv7 channels. In terms of biological role, peptide activator of Kv7.4/KCNQ4 channels. Also acts as a subtype-selective activator of channels formed by Kv7.3/KCNQ3, Kv7.2/Kv7.3 (KCNQ2/KCNQ3), Kv7.5/Kv7.3 (KCNQ3/KCNQ5) subunits. In Androctonus australis (Sahara scorpion), this protein is Potassium channel toxin AaTXK-beta.